A 306-amino-acid chain; its full sequence is Ribonuclease Z (306 aa).

7 residues coordinate Zn(2+): histidine 61, histidine 63, aspartate 65, histidine 66, histidine 137, aspartate 207, and histidine 263. Catalysis depends on aspartate 65, which acts as the Proton acceptor.

This sequence belongs to the RNase Z family. In terms of assembly, homodimer. It depends on Zn(2+) as a cofactor.

The enzyme catalyses Endonucleolytic cleavage of RNA, removing extra 3' nucleotides from tRNA precursor, generating 3' termini of tRNAs. A 3'-hydroxy group is left at the tRNA terminus and a 5'-phosphoryl group is left at the trailer molecule.. Its function is as follows. Zinc phosphodiesterase, which displays some tRNA 3'-processing endonuclease activity. Probably involved in tRNA maturation, by removing a 3'-trailer from precursor tRNA. The chain is Ribonuclease Z from Thermococcus sibiricus (strain DSM 12597 / MM 739).